A 524-amino-acid polypeptide reads, in one-letter code: Lysophospholipid acyltransferase LPCAT4 (524 aa).

2 helical membrane passes run 40–62 and 87–107; these read CLLG…FLLW and TVCH…LGFL. The HXXXXD motif signature appears at 129-134; sequence HSTFFD. N-linked (GlcNAc...) asparagine glycosylation is present at Asn-152. Residues 489–524 are disordered; it reads PPHTSRGTSQTPNASSPGNPTALANGTVQAPKQKGD. A compositionally biased stretch (polar residues) spans 493 to 518; the sequence is SRGTSQTPNASSPGNPTALANGTVQA.

Belongs to the 1-acyl-sn-glycerol-3-phosphate acyltransferase family. In terms of tissue distribution, widely expressed with predominant level in brain.

The protein localises to the endoplasmic reticulum membrane. The catalysed reaction is a 1-acyl-sn-glycero-3-phosphoethanolamine + an acyl-CoA = a 1,2-diacyl-sn-glycero-3-phosphoethanolamine + CoA. The enzyme catalyses a 1-O-(1Z-alkenyl)-sn-glycero-3-phosphoethanolamine + an acyl-CoA = a 1-O-(1Z-alkenyl)-2-acyl-sn-glycero-3-phosphoethanolamine + CoA. It catalyses the reaction a 1-acyl-sn-glycero-3-phosphocholine + an acyl-CoA = a 1,2-diacyl-sn-glycero-3-phosphocholine + CoA. It carries out the reaction a 1-O-alkyl-sn-glycero-3-phosphocholine + acetyl-CoA = a 1-O-alkyl-2-acetyl-sn-glycero-3-phosphocholine + CoA. The catalysed reaction is a 1-acyl-sn-glycero-3-phospho-L-serine + an acyl-CoA = a 1,2-diacyl-sn-glycero-3-phospho-L-serine + CoA. The enzyme catalyses octanoyl-CoA + a 1-acyl-sn-glycero-3-phosphoethanolamine = 1-acyl-2-octanoyl-sn-glycero-3-phosphoethanolamine + CoA. It catalyses the reaction a 1-acyl-sn-glycero-3-phosphoethanolamine + hexadecanoyl-CoA = 1-acyl-2-hexadecanoyl-sn-glycero-3-phosphoethanolamine + CoA. It carries out the reaction a 1-acyl-sn-glycero-3-phosphoethanolamine + octadecanoyl-CoA = 1-acyl-2-octadecanoyl-sn-glycero-3-phosphoethanolamine + CoA. The catalysed reaction is a 1-acyl-sn-glycero-3-phosphoethanolamine + (9Z)-octadecenoyl-CoA = 1-acyl-2-(9Z)-octadecenoyl-sn-glycero-3-phosphoethanolamine + CoA. The enzyme catalyses a 1-acyl-sn-glycero-3-phosphoethanolamine + (5Z,8Z,11Z,14Z)-eicosatetraenoyl-CoA = 1-acyl-2-(5Z,8Z,11Z,14Z)-eicosatetraenoyl-sn-glycero-3-phosphoethanolamine + CoA. It catalyses the reaction a 1-O-(1Z-alkenyl)-sn-glycero-3-phosphoethanolamine + octanoyl-CoA = 1-O-(1Z)-alkenyl-2-octanoyl-sn-glycero-3-phosphoethanolamine + CoA. It carries out the reaction a 1-O-(1Z-alkenyl)-sn-glycero-3-phosphoethanolamine + hexadecanoyl-CoA = 1-O-(1Z)-alkenyl-2-hexadecanoyl-sn-glycero-3-phosphoethanolamine + CoA. The catalysed reaction is a 1-O-(1Z-alkenyl)-sn-glycero-3-phosphoethanolamine + octadecanoyl-CoA = 1-O-(1Z)-alkenyl-2-octadecanoyl-sn-glycero-3-phosphoethanolamine + CoA. The enzyme catalyses a 1-O-(1Z-alkenyl)-sn-glycero-3-phosphoethanolamine + (9Z)-octadecenoyl-CoA = 1-O-(1Z)-alkenyl-2-(9Z)-octadecenoyl-sn-glycero-3-phosphoethanolamine + CoA. It catalyses the reaction a 1-O-(1Z-alkenyl)-sn-glycero-3-phosphoethanolamine + (5Z,8Z,11Z,14Z)-eicosatetraenoyl-CoA = 1-O-(1Z)-alkenyl-2-(5Z,8Z,11Z,14Z)-eicosatetraenoyl-sn-glycero-3-phosphoethanolamine + CoA. It carries out the reaction a 1-acyl-sn-glycero-3-phosphocholine + hexadecanoyl-CoA = 1-acyl-2-hexadecanoyl-sn-glycero-3-phosphocholine + CoA. The catalysed reaction is a 1-acyl-sn-glycero-3-phosphocholine + (9Z)-octadecenoyl-CoA = a 1-acyl-2-(9Z)-octadecenoyl-sn-glycero-3-phosphocholine + CoA. The enzyme catalyses 1-O-hexadecyl-sn-glycero-3-phosphocholine + (9Z)-octadecenoyl-CoA = 1-O-hexadecyl-2-(9Z)-octadecenoyl-sn-glycero-3-phosphocholine + CoA. It catalyses the reaction 1-O-hexadecyl-sn-glycero-3-phosphocholine + (5Z,8Z,11Z,14Z)-eicosatetraenoyl-CoA = 1-O-hexadecyl-2-(5Z,8Z,11Z,14Z)-eicosatetraenoyl-sn-glycero-3-phosphocholine + CoA. It carries out the reaction 1-hexadecanoyl-sn-glycero-3-phospho-L-serine + (9Z)-octadecenoyl-CoA = 1-hexadecanoyl-2-(9Z-octadecenoyl)-sn-glycero-3-phospho-L-serine + CoA. The catalysed reaction is 1-octadecanoyl-sn-glycero-3-phospho-(1'-sn-glycerol) + (9Z)-octadecenoyl-CoA = 1-octadecanoyl-2-(9Z-octadecenoyl)-sn-glycero-3-phospho-(1'-sn-glycerol) + CoA. The enzyme catalyses 1-octadecanoyl-sn-glycero-3-phospho-(1'-sn-glycerol) + (5Z,8Z,11Z,14Z)-eicosatetraenoyl-CoA = 1-octadecanoyl-2-(5Z,8Z,11Z,14Z-eicosatetraenoyl)-sn-glycero-3-phospho-(1'-sn-glycerol) + CoA. Its pathway is lipid metabolism; phospholipid metabolism. Functionally, displays acyl-CoA-dependent lysophospholipid acyltransferase activity with a subset of lysophospholipids as substrates; converts lysophosphatidylethanolamine to phosphatidylethanolamine, lysophosphatidylcholine to phosphatidycholine, 1-alkenyl-lysophatidylethanolamine to 1-alkenyl-phosphatidylethanolamine, lysophosphatidylglycerol and alkyl-lysophosphatidylcholine to phosphatidylglycerol and alkyl-phosphatidylcholine, respectively. In contrast, has no lysophosphatidylinositol, glycerol-3-phosphate, diacylglycerol or lysophosphatidic acid acyltransferase activity. Prefers long chain acyl-CoAs (C16, C18) as acyl donors. This is Lysophospholipid acyltransferase LPCAT4 (LPCAT4) from Homo sapiens (Human).